A 311-amino-acid polypeptide reads, in one-letter code: Glycine--tRNA ligase alpha subunit (311 aa).

This sequence belongs to the class-II aminoacyl-tRNA synthetase family. Tetramer of two alpha and two beta subunits.

The protein resides in the cytoplasm. The catalysed reaction is tRNA(Gly) + glycine + ATP = glycyl-tRNA(Gly) + AMP + diphosphate. This chain is Glycine--tRNA ligase alpha subunit, found in Rhizobium meliloti (strain 1021) (Ensifer meliloti).